Consider the following 102-residue polypeptide: A-type ATP synthase subunit F (102 aa).

This sequence belongs to the V-ATPase F subunit family. As to quaternary structure, has multiple subunits with at least A(3), B(3), C, D, E, F, H, I and proteolipid K(x).

The protein resides in the cell membrane. Its function is as follows. Component of the A-type ATP synthase that produces ATP from ADP in the presence of a proton gradient across the membrane. The protein is A-type ATP synthase subunit F of Thermococcus kodakarensis (strain ATCC BAA-918 / JCM 12380 / KOD1) (Pyrococcus kodakaraensis (strain KOD1)).